The primary structure comprises 98 residues: Ferredoxin-like protein (98 aa).

To ferredoxins from P.putida and C.tartarivorum, ferredoxin I from A.vinelandii, ferredoxin II from D.desulfuricans.

In terms of biological role, could be a 3Fe-4S cluster-containing protein. In Rhizobium leguminosarum bv. trifolii, this protein is Ferredoxin-like protein (fixX).